A 1775-amino-acid polypeptide reads, in one-letter code: ATP-dependent RNA helicase DEAH12, chloroplastic (1775 aa).

The N-terminal 33 residues, 1–33 (MRNSFPPSDGGRSATDRRQQSSHSSSTNRYNSR), are a transit peptide targeting the chloroplast. The disordered stretch occupies residues 1-77 (MRNSFPPSDG…NPSSGYSPPV (77 aa)). A compositionally biased stretch (low complexity) spans 21-34 (SSHSSSTNRYNSRS). The segment covering 35–60 (AQSSPPLNHRPTWNQQHSQYPNSNFP) has biased composition (polar residues). The Helicase ATP-binding domain occupies 316–480 (LKKIHREQIM…FFSCGILLVN (165 aa)). ATP is bound at residue 329 to 336 (GETGSGKS). A DEAH box motif is present at residues 427–430 (DEAH). The Helicase C-terminal domain occupies 510 to 676 (DVVKMAVEIH…VALLRMLALG (167 aa)). The interval 1560–1767 (IEVECPICLS…EPCYAHLRTI (208 aa)) is TRIAD supradomain. Zn(2+) is bound by residues cysteine 1564, cysteine 1567, cysteine 1580, histidine 1582, cysteine 1585, cysteine 1588, cysteine 1607, cysteine 1612, cysteine 1652, cysteine 1657, cysteine 1675, cysteine 1678, cysteine 1683, cysteine 1686, histidine 1691, cysteine 1696, cysteine 1722, and cysteine 1725. The segment at 1564–1612 (CPICLSEVDDGYSLEGCSHLFCKACLLEQFEASMRNFDAFPILCSHIDC) adopts an RING-type 1 zinc-finger fold. An IBR-type zinc finger spans residues 1631–1696 (DELFSASLSS…HLEYHPLITC (66 aa)). Residues 1722–1750 (CPICKSTIEKTDGCNHMKCRCGKHICWTC) form an RING-type 2; atypical zinc finger. Residue cysteine 1735 is part of the active site. Positions 1740 and 1742 each coordinate Zn(2+).

Belongs to the DEAD box helicase family. DEAH subfamily.

It is found in the plastid. The protein resides in the chloroplast. It catalyses the reaction ATP + H2O = ADP + phosphate + H(+). The sequence is that of ATP-dependent RNA helicase DEAH12, chloroplastic from Arabidopsis thaliana (Mouse-ear cress).